A 558-amino-acid polypeptide reads, in one-letter code: Hsp70-Hsp90 organizing protein 3 (558 aa).

4 TPR repeats span residues 2–35 (AEEAKSKGNAAFSSGDYATAITHFTEAINLSPTN), 37–69 (ILYSNRSASYASLHRYEEALSDAKKTIELKPDW), 70–103 (SKGYSRLGAAFIGLSKFDEAVDSYKKGLEIDPSN), and 136–173 (EKLTADPGTRVYLEQDDFVKTMKEIQRNPNNLNLYMKD). Residues 131-170 (GKEMWEKLTADPGTRVYLEQDDFVKTMKEIQRNPNNLNLY) enclose the STI1 1 domain. The disordered stretch occupies residues 191–232 (SSGEDTEMKEADERKEPEPEMEPMELTEEERQKKERKEKALK). The span at 196–208 (TEMKEADERKEPE) shows a compositional bias: basic and acidic residues. Over residues 209-218 (PEMEPMELTE) the composition is skewed to acidic residues. Residues 219 to 232 (EERQKKERKEKALK) are compositionally biased toward basic and acidic residues. Positions 227 to 244 (KEKALKEKGEGNVAYKKK) match the Bipartite nuclear localization signal motif. 6 TPR repeats span residues 230–263 (ALKEKGEGNVAYKKKDFGRAVEHYTKAMELDDED), 265–297 (SYLTNRAAVYLEMGKYEECIEDCDKAVERGREL), 305–342 (ARALTRKGSALVKMARCSKDFEPAIETFQKALTEHRNP), 369–402 (AEEEREKGNGFFKEQKYPEAVKHYSEAIKRNPND), 404–436 (RAYSNRAACYTKLGALPEGLKDAEKCIELDPSF), and 437–470 (TKGYSRKGAIQFFMKEYDKAMETYQEGLKHDPKN). The region spanning 507–546 (DPEVQNILSDPVMRQVLVDFQENPKAAQEHMKNPMVMNKI) is the STI1 2 domain.

In terms of assembly, co-chaperone that forms a complex with HSP70 and HSP90 and preproteins (e.g. chloroplast preproteins). In terms of processing, phosphorylated. Acetylated.

Its subcellular location is the cytoplasm. The protein localises to the nucleus. Functionally, mediates the association of the molecular chaperones HSP70 and HSP90. Mediates nuclear encoded chloroplast preproteins binding to HSP90 prior to chloroplastic sorting. Involved in acclimation to heat. The protein is Hsp70-Hsp90 organizing protein 3 (HOP3) of Arabidopsis thaliana (Mouse-ear cress).